Here is a 605-residue protein sequence, read N- to C-terminus: Protein ZRG17 (605 aa).

Residues 1 to 225 are Cytoplasmic-facing; it reads METPQMNAIQ…DLLSNLPWPK (225 aa). Residues Ser-16 and Ser-131 each carry the phosphoserine modification. The disordered stretch occupies residues 118-178; it reads PAPKLVPPPP…PSSAASRTSF (61 aa). The span at 143–176 shows a compositional bias: polar residues; that stretch reads SKRSSMTLDSPFNFTTSTLQPHQQTPPSSAASRT. The chain crosses the membrane as a helical span at residues 226–246; the sequence is AYIQLSIAALQIFACLITFQV. At 247–254 the chain is on the lumenal side; the sequence is GHLYSWSN. Residues 255 to 275 form a helical membrane-spanning segment; that stretch reads FITLSHFITYDIIGSLVIIFV. The Cytoplasmic portion of the chain corresponds to 276–287; it reads ENLSQFQVWFTG. A helical membrane pass occupies residues 288–308; that stretch reads TITFPFGLNRIDVLLSFALAV. Residue Ser-309 is a topological domain, lumenal. The chain crosses the membrane as a helical span at residues 310 to 330; sequence LCFVGLDLLFHIIEEFIVLFV. Residues 331–363 lie on the Cytoplasmic side of the membrane; it reads ESGSSLTNNHDHDEINEQIPHSHIANANDSQNE. The helical transmembrane segment at 364–384 threads the bilayer; it reads NITLWYSILMINLVLSTLSLY. Topologically, residues 385–399 are lumenal; it reads KTFYANKYSNLKTKN. Residues 400 to 420 form a helical membrane-spanning segment; that stretch reads PIITITYTAYLFIYPLLLDLL. Residues 421–422 lie on the Cytoplasmic side of the membrane; it reads SS. Residues 423–443 form a helical membrane-spanning segment; it reads ISDYLATLVISSLILWHGLTI. Over 444-545 the chain is Lumenal; the sequence is ARWTSTVLLM…ERLSEFKSRY (102 aa). Residues 473–482 are compositionally biased toward polar residues; the sequence is DTTAHTQQVE. The tract at residues 473-497 is disordered; sequence DTTAHTQQVESKAAKEKPSVRPRSM. Ser-498 carries the post-translational modification Phosphoserine. The helical transmembrane segment at 546–566 threads the bilayer; that stretch reads ILNYDDIVISKVNFTLYVVLI. The Cytoplasmic segment spans residues 567 to 605; the sequence is KITMKGGSDDDELMLRLAIDKCIQTSIPTCETTIDIDRI.

It localises to the endoplasmic reticulum membrane. In Saccharomyces cerevisiae (strain ATCC 204508 / S288c) (Baker's yeast), this protein is Protein ZRG17 (ZRG17).